A 435-amino-acid chain; its full sequence is Histidine--tRNA ligase (435 aa).

It belongs to the class-II aminoacyl-tRNA synthetase family.

The protein resides in the cytoplasm. It catalyses the reaction tRNA(His) + L-histidine + ATP = L-histidyl-tRNA(His) + AMP + diphosphate + H(+). The sequence is that of Histidine--tRNA ligase (hisS) from Aeropyrum pernix (strain ATCC 700893 / DSM 11879 / JCM 9820 / NBRC 100138 / K1).